We begin with the raw amino-acid sequence, 281 residues long: 2,3,4,5-tetrahydropyridine-2,6-dicarboxylate N-succinyltransferase (281 aa).

R108 and D145 together coordinate substrate.

Belongs to the transferase hexapeptide repeat family. Homotrimer.

It localises to the cytoplasm. It catalyses the reaction (S)-2,3,4,5-tetrahydrodipicolinate + succinyl-CoA + H2O = (S)-2-succinylamino-6-oxoheptanedioate + CoA. It functions in the pathway amino-acid biosynthesis; L-lysine biosynthesis via DAP pathway; LL-2,6-diaminopimelate from (S)-tetrahydrodipicolinate (succinylase route): step 1/3. This chain is 2,3,4,5-tetrahydropyridine-2,6-dicarboxylate N-succinyltransferase, found in Parvibaculum lavamentivorans (strain DS-1 / DSM 13023 / NCIMB 13966).